A 359-amino-acid chain; its full sequence is Protein mab-21-like 2 (359 aa).

The protein belongs to the mab-21 family. Expressed in the adult cerebellum and eye, with lower levels in the adult forebrain. In embryos at 10.5 days post-coitum strongly expressed in the rostral and distal regions of the developing neural retina, with no expression immediately adjacent to the closing optic fissure. Expression is also observed in the dorsal and ventral aspects of the developing forelimb bud and in the developing pharyngeal arches, as well as in the midbrain.

The protein localises to the nucleus. The protein resides in the cytoplasm. Required for several aspects of embryonic development including normal development of the eye, notochord, neural tube and other organ tissues, and for embryonic turning. The polypeptide is Protein mab-21-like 2 (Mab21l2) (Mus musculus (Mouse)).